The primary structure comprises 484 residues: Oxysterol-binding protein-related protein 2 (484 aa).

2 positions are modified to phosphoserine: S19 and S20. Residues 35–61 are disordered; the sequence is DLDTSKSTRSGKNGEKPQQENGIQKHR. A 1,2-diacyl-sn-glycero-3-phospho-(1D-myo-inositol-4,5-bisphosphate) is bound by residues K90 and 178–179; that span reads HH. Basic and acidic residues-rich tracts occupy residues 319 to 340 and 424 to 450; these read KQEK…EKAN and SQEK…EWRT. 2 disordered regions span residues 319 to 348 and 423 to 454; these read KQEK…GDVA and ASQE…RWFS. Position 431–435 (431–435) interacts with a 1,2-diacyl-sn-glycero-3-phospho-(1D-myo-inositol-4,5-bisphosphate); the sequence is EEKQR.

Belongs to the OSBP family. As to quaternary structure, monomer. Homotetramer; phosphatidylinositol-4,5-bisphosphate binding promotes formation of stable tetramers. Interacts with DIAPH1. As to expression, detected in cochlea, in inner and outer hair cells in the organ of Corti (at protein level).

The protein resides in the cytoplasm. The protein localises to the cytosol. It localises to the lipid droplet. It is found in the cell membrane. Functionally, intracellular transport protein that binds sterols and phospholipids and mediates lipid transport between intracellular compartments. Increases plasma membrane cholesterol levels and decreases phosphatidylinositol-4,5-bisphosphate levels in the cell membrane. Binds phosphoinositides, such as phosphatidylinositol-4,5-bisphosphate. Exhibits strong binding to phosphatidic acid and weak binding to phosphatidylinositol 3-phosphate. Binds cholesterol, dehydroergosterol, 22(R)-hydroxycholesterol and 25-hydroxycholesterol (in vitro). This Mus musculus (Mouse) protein is Oxysterol-binding protein-related protein 2 (Osbpl2).